Here is a 128-residue protein sequence, read N- to C-terminus: Large ribosomal subunit protein uL22 (128 aa).

The protein belongs to the universal ribosomal protein uL22 family. Part of the 50S ribosomal subunit.

In terms of biological role, this protein binds specifically to 23S rRNA; its binding is stimulated by other ribosomal proteins, e.g. L4, L17, and L20. It is important during the early stages of 50S assembly. It makes multiple contacts with different domains of the 23S rRNA in the assembled 50S subunit and ribosome. Functionally, the globular domain of the protein is located near the polypeptide exit tunnel on the outside of the subunit, while an extended beta-hairpin is found that lines the wall of the exit tunnel in the center of the 70S ribosome. The polypeptide is Large ribosomal subunit protein uL22 (Prochlorococcus marinus subsp. pastoris (strain CCMP1986 / NIES-2087 / MED4)).